Reading from the N-terminus, the 323-residue chain is Flavone synthase cfoJ (323 aa).

FMN is required as a cofactor.

It participates in secondary metabolite biosynthesis; flavonoid biosynthesis. Functionally, FMN-dependent oxidoreductase; part of the gene cluster that mediates the biosynthesis of chlorflavonin, a fungal flavonoid with acetolactate synthase inhibitory activity. Within the pathway, cfoJ acts as a flavone synthase (FNS) and catalyzes the formation of a double bond between C2 and C3, converting the flavanone into a flavone. The pathway begins with the PKS-NRPS hybrid synthetase cfoA that uses benzoic acid or p-hydroxybenzoic acid as a starter unit with four rounds of chain elongation using malonyl-CoA to form the chalcone skeleton. Then, a new type of chalcone isomerase, cfoK, catalyzes the conversion of the chalcone into a flavanone by a histidine-mediated oxa-Michael addition mechanism. The desaturation of flavanone to flavone is catalyzed by a new type of flavone synthase, the flavin mononucleotide (FMN)-dependent oxidoreductase cfoJ. Monooxygenases cfoF, cfoG, and P450 cfoH are responsible for the hydroxylation of the flavonoid skeleton at sites C3, C8, and C2', respectively. Like cfoF, the dehydratase cfoI plays also a role in the hydroxylation of position C3. Methyltransferases cfoB, cfoC, and cfoD then catalyze the methylation of C7-OH, C8-OH, and C3-OH, respectively. Finally, the monooxygenase cfoE is responsible for the chlorination of flavonoid at position C3'. The chain is Flavone synthase cfoJ from Aspergillus candidus.